Consider the following 291-residue polypeptide: Pantothenate synthetase (291 aa).

ATP is bound at residue 30–37; it reads MGYLHAGH. Catalysis depends on histidine 37, which acts as the Proton donor. Position 61 (glutamine 61) interacts with (R)-pantoate. Glutamine 61 is a beta-alanine binding site. Position 147 to 150 (147 to 150) interacts with ATP; the sequence is GEKD. Glutamine 153 lines the (R)-pantoate pocket. ATP-binding positions include valine 176 and 184 to 187; that span reads LSSR.

It belongs to the pantothenate synthetase family. In terms of assembly, homodimer.

It is found in the cytoplasm. It carries out the reaction (R)-pantoate + beta-alanine + ATP = (R)-pantothenate + AMP + diphosphate + H(+). Its pathway is cofactor biosynthesis; (R)-pantothenate biosynthesis; (R)-pantothenate from (R)-pantoate and beta-alanine: step 1/1. Its function is as follows. Catalyzes the condensation of pantoate with beta-alanine in an ATP-dependent reaction via a pantoyl-adenylate intermediate. The polypeptide is Pantothenate synthetase (Rhizobium rhizogenes (strain K84 / ATCC BAA-868) (Agrobacterium radiobacter)).